The following is a 1723-amino-acid chain: Lys-gingipain HG66 (1723 aa).

Residues 1-24 (MRKLLLLIAASLLGVGLYAQNAKI) form the signal peptide. Positions 25-228 (KLDAPTTRTT…ETAYKQLFNR (204 aa)) are excised as a propeptide. Residues Asp313, Asp337, Asp339, Phe341, and Glu343 each coordinate Ca(2+). His444 acts as the Proton donor in catalysis. Catalysis depends on Cys477, which acts as the Nucleophile. Phe482 and Glu491 together coordinate Ca(2+). The tract at residues 965 to 985 (DAPNGTPNPNPNPNPGTTTLS) is disordered. Ca(2+) contacts are provided by Ser987, Glu989, Asp1000, Asp1002, Asp1004, His1006, Ser1021, Gly1023, Asn1042, Asp1145, and Glu1146.

It belongs to the peptidase C25 family. In terms of processing, proteolytically cleaved into a catalytic subunit and three adhesins. Arg-gingipain is involved in this post-translational processing.

The protein localises to the secreted. It carries out the reaction Endopeptidase with strict specificity for lysyl bonds.. Cysteine proteinase with a strong preference for substrates with Lys in the P1 position. Hydrolyzes bovine hemoglobin, bovine serum albumin, casein, human placental type I collagen and human IgA and IgG. Disrupts the functions of polymorphonuclear leukocytes. May act as a virulence factor in the development of peridontal disease. Involved in the coaggregation of P.gingivalis with other oral bacteria. The polypeptide is Lys-gingipain HG66 (Porphyromonas gingivalis (Bacteroides gingivalis)).